Here is a 158-residue protein sequence, read N- to C-terminus: Fluoride-specific ion channel FluC 2 (158 aa).

4 helical membrane-spanning segments follow: residues 25–45 (AWHG…IGGT), 63–83 (WTTF…MVVI), 95–115 (PFFG…AVDI), and 126–146 (TALA…RLAA). Na(+)-binding residues include Gly-103 and Thr-106.

It belongs to the fluoride channel Fluc/FEX (TC 1.A.43) family.

Its subcellular location is the cell membrane. The enzyme catalyses fluoride(in) = fluoride(out). Its activity is regulated as follows. Na(+) is not transported, but it plays an essential structural role and its presence is essential for fluoride channel function. In terms of biological role, fluoride-specific ion channel. Important for reducing fluoride concentration in the cell, thus reducing its toxicity. This Streptomyces avermitilis (strain ATCC 31267 / DSM 46492 / JCM 5070 / NBRC 14893 / NCIMB 12804 / NRRL 8165 / MA-4680) protein is Fluoride-specific ion channel FluC 2.